A 412-amino-acid chain; its full sequence is [Pyruvate dehydrogenase (acetyl-transferring)] kinase isozyme 4, mitochondrial (412 aa).

A Histidine kinase domain is found at 138 to 368 (ILEYKDTCTV…DAIIYLKALS (231 aa)). ATP-binding positions include 254–261 (ELFKNAMR), Asp293, 312–313 (ST), and 329–334 (GFGYGL).

This sequence belongs to the PDK/BCKDK protein kinase family. In terms of assembly, homodimer. Interacts with the pyruvate dehydrogenase complex subunit DLAT, and is part of the multimeric pyruvate dehydrogenase complex that contains multiple copies of pyruvate dehydrogenase (E1), dihydrolipoamide acetyltransferase (DLAT, E2) and lipoamide dehydrogenase (DLD, E3).

Its subcellular location is the mitochondrion matrix. The catalysed reaction is L-seryl-[pyruvate dehydrogenase E1 alpha subunit] + ATP = O-phospho-L-seryl-[pyruvate dehydrogenase E1 alpha subunit] + ADP + H(+). Kinase that plays a key role in regulation of glucose and fatty acid metabolism and homeostasis via phosphorylation of the pyruvate dehydrogenase subunits PDHA1 and PDHA2. This inhibits pyruvate dehydrogenase activity, and thereby regulates metabolite flux through the tricarboxylic acid cycle, down-regulates aerobic respiration and inhibits the formation of acetyl-coenzyme A from pyruvate. Inhibition of pyruvate dehydrogenase decreases glucose utilization and increases fat metabolism in response to prolonged fasting and starvation. Plays an important role in maintaining normal blood glucose levels under starvation, and is involved in the insulin signaling cascade. Via its regulation of pyruvate dehydrogenase activity, plays an important role in maintaining normal blood pH and in preventing the accumulation of ketone bodies under starvation. In the fed state, mediates cellular responses to glucose levels and to a high-fat diet. Regulates both fatty acid oxidation and de novo fatty acid biosynthesis. Plays a role in the generation of reactive oxygen species. Protects detached epithelial cells against anoikis. Plays a role in cell proliferation via its role in regulating carbohydrate and fatty acid metabolism. This Mus musculus (Mouse) protein is [Pyruvate dehydrogenase (acetyl-transferring)] kinase isozyme 4, mitochondrial (Pdk4).